Reading from the N-terminus, the 223-residue chain is MKPIIPPQNLSELLERANMMAGISLAQIAAHRGITVPKDLKRDKGWVGQLIEMELGATAGSKPEQDFLHLGVELKTIPIDSKGKPLETTYVCVAPLTNIEGLTWQDSLVCHKLQRVLWVPVEGERHIPVGDRRVGTPILWEPDLQEQRLLQQDWEEIMELIALGKVEKLTARHGEVLQLRPKAANSKALTQSIAEDGSLKMTNPRGFYLKTAFTAMLLNKVFG.

It belongs to the MutH family.

The protein resides in the cytoplasm. Functionally, sequence-specific endonuclease that cleaves unmethylated GATC sequences. It is involved in DNA mismatch repair. The polypeptide is DNA mismatch repair protein MutH (Shewanella sp. (strain MR-4)).